Here is a 496-residue protein sequence, read N- to C-terminus: Isocitrate dehydrogenase [NADP] (496 aa).

2 residues coordinate NADP(+): Leu-88 and Thr-90. Residues Ser-98, Asn-100, Arg-104, Arg-114, and Arg-137 each coordinate D-threo-isocitrate. 3 residues coordinate NADP(+): Asn-193, Gln-229, and Lys-232. Residue Asp-248 coordinates Mg(2+). 7 residues coordinate NADP(+): Glu-277, Gly-281, Ser-282, Ala-283, Lys-285, Tyr-286, and Asn-293.

The protein belongs to the isocitrate and isopropylmalate dehydrogenases family. In terms of assembly, homodimer. Mg(2+) serves as cofactor. Mn(2+) is required as a cofactor.

The catalysed reaction is D-threo-isocitrate + NADP(+) = 2-oxoglutarate + CO2 + NADPH. Its function is as follows. Catalyzes the oxidative decarboxylation of isocitrate to 2-oxoglutarate and carbon dioxide with the concomitant reduction of NADP(+). The polypeptide is Isocitrate dehydrogenase [NADP] (icd) (Thermus thermophilus (strain ATCC 27634 / DSM 579 / HB8)).